A 554-amino-acid polypeptide reads, in one-letter code: Arginine--tRNA ligase (554 aa).

A 'HIGH' region motif is present at residues 129–139 (ANPTGPLHIGH).

Belongs to the class-I aminoacyl-tRNA synthetase family. Monomer.

It is found in the cytoplasm. It catalyses the reaction tRNA(Arg) + L-arginine + ATP = L-arginyl-tRNA(Arg) + AMP + diphosphate. The sequence is that of Arginine--tRNA ligase from Syntrophotalea carbinolica (strain DSM 2380 / NBRC 103641 / GraBd1) (Pelobacter carbinolicus).